The primary structure comprises 177 residues: Large ribosomal subunit protein uL6 (177 aa).

Belongs to the universal ribosomal protein uL6 family. Part of the 50S ribosomal subunit.

Functionally, this protein binds to the 23S rRNA, and is important in its secondary structure. It is located near the subunit interface in the base of the L7/L12 stalk, and near the tRNA binding site of the peptidyltransferase center. In Aeromonas hydrophila subsp. hydrophila (strain ATCC 7966 / DSM 30187 / BCRC 13018 / CCUG 14551 / JCM 1027 / KCTC 2358 / NCIMB 9240 / NCTC 8049), this protein is Large ribosomal subunit protein uL6.